Consider the following 629-residue polypeptide: tRNA uridine 5-carboxymethylaminomethyl modification enzyme MnmG (629 aa).

Residues 14-19, V126, and S181 contribute to the FAD site; that span reads GAGHAG. 273–287 serves as a coordination point for NAD(+); the sequence is GPRYCPSIEDKVVRF. Position 370 (Q370) interacts with FAD.

This sequence belongs to the MnmG family. In terms of assembly, homodimer. Heterotetramer of two MnmE and two MnmG subunits. The cofactor is FAD.

The protein resides in the cytoplasm. In terms of biological role, NAD-binding protein involved in the addition of a carboxymethylaminomethyl (cmnm) group at the wobble position (U34) of certain tRNAs, forming tRNA-cmnm(5)s(2)U34. This is tRNA uridine 5-carboxymethylaminomethyl modification enzyme MnmG from Bacillus mycoides (strain KBAB4) (Bacillus weihenstephanensis).